A 361-amino-acid polypeptide reads, in one-letter code: Glutamate 5-kinase (361 aa).

An ATP-binding site is contributed by Lys-7. The substrate site is built by Ser-47, Asp-134, and Asn-146. Residues Thr-166–Asp-167 and Thr-209–Lys-215 contribute to the ATP site. The region spanning Leu-274–Asn-345 is the PUA domain.

Belongs to the glutamate 5-kinase family.

It localises to the cytoplasm. It catalyses the reaction L-glutamate + ATP = L-glutamyl 5-phosphate + ADP. It participates in amino-acid biosynthesis; L-proline biosynthesis; L-glutamate 5-semialdehyde from L-glutamate: step 1/2. Catalyzes the transfer of a phosphate group to glutamate to form L-glutamate 5-phosphate. The polypeptide is Glutamate 5-kinase (Prochlorococcus marinus (strain MIT 9313)).